The chain runs to 573 residues: Flagellin B (573 aa).

The protein belongs to the bacterial flagellin family. Heteromer of FlaA and FlaB. A flagellar filament composed exclusively of FlaA is indistinguishable in length from that of the wild-type and shows a slight reduction in motility. The flagellar filament composed exclusively of the FlaB is severely truncated in length and greatly reduced in motility. Thus, while both flagellins are not necessary for motility, both are required for a fully active flagellar filament.

It is found in the secreted. The protein resides in the bacterial flagellum. Flagellin is the subunit protein which polymerizes to form the filaments of bacterial flagella. This Campylobacter coli protein is Flagellin B (flaB).